A 307-amino-acid polypeptide reads, in one-letter code: FNKFGKARLYYEALSFEEQDEIYAYTKRNVLPTLTQMNLKYAISAKNRARTVAGVSILSTMTGRMFHQKCLKSIAATRGVPVVIGTTKFYGGWDDMLRRLIKDVDSPVLMGWDYPKCDRAMPNILRIVSSLVLARKHDSCCSHTDRFYRLANECAQVLSEIVMCGGCYYVKPGGTSSGDATTAFANSVFNICQAVSANVCSLMACNGHKIEDLSIRELQKRLYSNVYRADHVDPAFVSEYYEFLNKHFSMMILSDDGVVCYNSEFASKGYIANISAFQQVLYYQNNVFMSEAKCWVETDIEKGPHEF.

Residues 1–76 (FNKFGKARLY…HQKCLKSIAA (76 aa)) form a rdRp Fingers N-ter region. The region spanning 1–307 (FNKFGKARLY…TDIEKGPHEF (307 aa)) is the Nsp12 RNA-dependent RNA polymerase domain. A rdRp Palm N-ter region spans residues 77–115 (TRGVPVVIGTTKFYGGWDDMLRRLIKDVDSPVLMGWDYP). The 163-residue stretch at 107–269 (PVLMGWDYPK…CYNSEFASKG (163 aa)) folds into the RdRp catalytic domain. The rdRp Fingers C-ter stretch occupies residues 116–174 (KCDRAMPNILRIVSSLVLARKHDSCCSHTDRFYRLANECAQVLSEIVMCGGCYYVKPGG). A rdRp Palm C-ter region spans residues 175-307 (TSSGDATTAF…TDIEKGPHEF (133 aa)). Active-site residues include serine 254, aspartate 255, and aspartate 256. Phenylalanine 307 is a region of interest (rdRp Thumb).

Belongs to the coronaviruses polyprotein 1ab family.

It catalyses the reaction RNA(n) + a ribonucleoside 5'-triphosphate = RNA(n+1) + diphosphate. The replicase polyprotein of coronaviruses is a multifunctional protein: it contains the activities necessary for the transcription of negative stranded RNA, leader RNA, subgenomic mRNAs and progeny virion RNA as well as proteinases responsible for the cleavage of the polyprotein into functional products. Its function is as follows. Non-structural protein 1: binds to the 40S ribosomal subunit and inhibits host translation. The nsp1-40S ribosome complex further induces an endonucleolytic cleavage near the 5'UTR of host mRNAs, targeting them for degradation. By suppressing host gene expression, nsp1 facilitates efficient viral gene expression in infected cells and evasion from host immune response. The chain is Replicase polyprotein 1ab (rep) from Rattus norvegicus (Rat).